The following is a 279-amino-acid chain: uncharacterized protein (279 aa).

Residues 1–87 enclose the Reverse transcriptase domain; that stretch reads MRVNGRNLTN…DEYIYLGRQI (87 aa).

This is an uncharacterized protein from Caenorhabditis elegans.